A 209-amino-acid polypeptide reads, in one-letter code: Isopentenyl-diphosphate Delta-isomerase (209 aa).

The Mn(2+) site is built by H31 and H38. The region spanning 36-171 (PLHLAFSVYI…RLLVSPWCRA (136 aa)) is the Nudix hydrolase domain. C73 is a catalytic residue. A Mg(2+)-binding site is contributed by C73. Residue H75 coordinates Mn(2+). E93 is a Mg(2+) binding site. Residues E120 and E122 each contribute to the Mn(2+) site. Residue E122 is part of the active site.

The protein belongs to the IPP isomerase type 1 family. The cofactor is Mg(2+). It depends on Mn(2+) as a cofactor.

Its subcellular location is the cytoplasm. The catalysed reaction is isopentenyl diphosphate = dimethylallyl diphosphate. It participates in isoprenoid biosynthesis; dimethylallyl diphosphate biosynthesis; dimethylallyl diphosphate from isopentenyl diphosphate: step 1/1. Catalyzes the 1,3-allylic rearrangement of the homoallylic substrate isopentenyl (IPP) to its highly electrophilic allylic isomer, dimethylallyl diphosphate (DMAPP). This Rhizobium rhizogenes (Agrobacterium rhizogenes) protein is Isopentenyl-diphosphate Delta-isomerase.